The following is a 473-amino-acid chain: Ribosomal protein uS12 methylthiotransferase RimO (473 aa).

Residues 30-141 (ASVAVLHLGC…IVQIIERVER (112 aa)) enclose the MTTase N-terminal domain. [4Fe-4S] cluster is bound by residues cysteine 39, cysteine 75, cysteine 104, cysteine 179, cysteine 183, and cysteine 186. One can recognise a Radical SAM core domain in the interval 165 to 394 (TTHAPVAYLR…MQVQQGITFR (230 aa)). One can recognise a TRAM domain in the interval 397–463 (REQVGRVVPV…PYDLFGQVVA (67 aa)).

This sequence belongs to the methylthiotransferase family. RimO subfamily. [4Fe-4S] cluster is required as a cofactor.

It is found in the cytoplasm. The enzyme catalyses L-aspartate(89)-[ribosomal protein uS12]-hydrogen + (sulfur carrier)-SH + AH2 + 2 S-adenosyl-L-methionine = 3-methylsulfanyl-L-aspartate(89)-[ribosomal protein uS12]-hydrogen + (sulfur carrier)-H + 5'-deoxyadenosine + L-methionine + A + S-adenosyl-L-homocysteine + 2 H(+). In terms of biological role, catalyzes the methylthiolation of an aspartic acid residue of ribosomal protein uS12. In Synechococcus sp. (strain JA-2-3B'a(2-13)) (Cyanobacteria bacterium Yellowstone B-Prime), this protein is Ribosomal protein uS12 methylthiotransferase RimO.